The chain runs to 198 residues: Succinate dehydrogenase [ubiquinone] cytochrome b subunit, mitochondrial (198 aa).

Residues 1 to 50 constitute a mitochondrion transit peptide; sequence MSAMMVKLGLNKSALLLKPSAFSRAAALSSSRRLLFNTARTNFLSTSPLK. Over 51–99 the chain is Mitochondrial matrix; the sequence is NVASEMNTKAAIAEEQILNKQRAKRPISPHLTIYQPQLTWYLSSLHRIS. Positions 93 and 97 each coordinate a ubiquinone. Residues 100-120 form a helical membrane-spanning segment; the sequence is LVLMGLGFYLFTILFGVSGLL. Residues 121-139 lie on the Mitochondrial intermembrane side of the membrane; the sequence is GLGLTTEKVSNWYHQKFSK. The helical transmembrane segment at 140-160 threads the bilayer; sequence ITEWSIKGSFAYLFAIHYGGA. Residue His156 participates in heme binding. The Mitochondrial matrix portion of the chain corresponds to 161–175; that stretch reads IRHLIWDTAKELTLK. The helical transmembrane segment at 176–196 threads the bilayer; it reads GVYRTGYALIGFTAVLGTYLL. At 197-198 the chain is on the mitochondrial intermembrane side; the sequence is TL.

Belongs to the cytochrome b560 family. As to quaternary structure, forms part of complex II containing four subunits: a flavoprotein (FP), an iron-sulfur protein (IP) and a cytochrome b composed of two integral membrane proteins. The cofactor is heme.

The protein localises to the mitochondrion inner membrane. Its pathway is carbohydrate metabolism; tricarboxylic acid cycle. In terms of biological role, membrane-anchoring mono-heme cytochrome b subunit of succinate dehydrogenase (SDH) that is involved in system II of the mitochondrial electron transport chain and is responsible for transferring electrons from succinate to ubiquinone (coenzyme Q). SDH3 and SDH4 form the membrane dimer that anchors the catalytic dimer formed by SDH1 and SDH2 to the matrix surface of the mitochondrial inner membrane. Electrons originating from the catalytic dimer enter the membrane dimer for ubiquinone reduction. The polypeptide is Succinate dehydrogenase [ubiquinone] cytochrome b subunit, mitochondrial (SDH3) (Saccharomyces cerevisiae (strain ATCC 204508 / S288c) (Baker's yeast)).